Reading from the N-terminus, the 257-residue chain is 4-hydroxy-tetrahydrodipicolinate reductase (257 aa).

7–12 (GCLGRM) provides a ligand contact to NAD(+). Arg34 lines the NADP(+) pocket. Residues 96 to 98 (GTT) and 117 to 120 (SCNM) each bind NAD(+). His149 (proton donor/acceptor) is an active-site residue. His150 is a binding site for (S)-2,3,4,5-tetrahydrodipicolinate. Residue Lys153 is the Proton donor of the active site. Residue 159 to 160 (GT) participates in (S)-2,3,4,5-tetrahydrodipicolinate binding.

The protein belongs to the DapB family.

The protein localises to the cytoplasm. The catalysed reaction is (S)-2,3,4,5-tetrahydrodipicolinate + NAD(+) + H2O = (2S,4S)-4-hydroxy-2,3,4,5-tetrahydrodipicolinate + NADH + H(+). The enzyme catalyses (S)-2,3,4,5-tetrahydrodipicolinate + NADP(+) + H2O = (2S,4S)-4-hydroxy-2,3,4,5-tetrahydrodipicolinate + NADPH + H(+). The protein operates within amino-acid biosynthesis; L-lysine biosynthesis via DAP pathway; (S)-tetrahydrodipicolinate from L-aspartate: step 4/4. Its function is as follows. Catalyzes the conversion of 4-hydroxy-tetrahydrodipicolinate (HTPA) to tetrahydrodipicolinate. The polypeptide is 4-hydroxy-tetrahydrodipicolinate reductase (Anaplasma marginale (strain St. Maries)).